Consider the following 144-residue polypeptide: Large-conductance mechanosensitive channel (144 aa).

The next 2 membrane-spanning stretches (helical) occupy residues 16–36 (VIDLAVGVIIGAAFGKIVDSV) and 86–106 (GNFLTIVVNFVILAFIIFMMV).

Belongs to the MscL family. Homopentamer.

The protein localises to the cell inner membrane. Its function is as follows. Channel that opens in response to stretch forces in the membrane lipid bilayer. May participate in the regulation of osmotic pressure changes within the cell. The chain is Large-conductance mechanosensitive channel from Cupriavidus metallidurans (strain ATCC 43123 / DSM 2839 / NBRC 102507 / CH34) (Ralstonia metallidurans).